The chain runs to 214 residues: Nucleoplasmin-2 (214 aa).

Positions 119–214 (ERYEASDLTW…ARAKKPGFKK (96 aa)) are disordered. Residues 127 to 155 (TWEEEEEEEGEEEEEEEEDDEDEDADISL) are compositionally biased toward acidic residues. Positions 129–152 (EEEEEEEGEEEEEEEEDDEDEDAD) are acidic tract A2. The short motif at 165–180 (KRLVPQKQASVAKKKK) is the Bipartite nuclear localization signal element. A compositionally biased stretch (basic and acidic residues) spans 181-197 (LEKEEEEIRASVRDKSP). Residues 198-214 (VKKAKATARAKKPGFKK) show a composition bias toward basic residues.

This sequence belongs to the nucleoplasmin family. As to quaternary structure, homopentamer, when bound to H2A-H2B dimers only. Homodecamer of two stacked pentamers, when bound to H2A-H2B dimers and H3-H4 tetramers simultaneously.

Its subcellular location is the nucleus. In terms of biological role, core histones chaperone involved in chromatin reprogramming, specially during fertilization and early embryonic development. Probably involved in sperm DNA decondensation during fertilization. The polypeptide is Nucleoplasmin-2 (NPM2) (Homo sapiens (Human)).